Here is a 473-residue protein sequence, read N- to C-terminus: 6-phosphogluconate dehydrogenase, decarboxylating (473 aa).

Residues Gly-10 to Gly-15, Asn-33 to Thr-35, Val-74 to Ser-76, and Asn-102 each bind NADP(+). Substrate contacts are provided by residues Asn-102 and Ser-128–Gly-130. Residue Lys-182 is the Proton acceptor of the active site. Position 185–186 (His-185–Asn-186) interacts with substrate. The Proton donor role is filled by Glu-189. Residues Tyr-190, Lys-260, Arg-287, Arg-446, and His-452 each contribute to the substrate site.

The protein belongs to the 6-phosphogluconate dehydrogenase family. In terms of assembly, homodimer.

It catalyses the reaction 6-phospho-D-gluconate + NADP(+) = D-ribulose 5-phosphate + CO2 + NADPH. It functions in the pathway carbohydrate degradation; pentose phosphate pathway; D-ribulose 5-phosphate from D-glucose 6-phosphate (oxidative stage): step 3/3. Catalyzes the oxidative decarboxylation of 6-phosphogluconate to ribulose 5-phosphate and CO(2), with concomitant reduction of NADP to NADPH. This Buchnera aphidicola subsp. Schizaphis graminum (strain Sg) protein is 6-phosphogluconate dehydrogenase, decarboxylating (gnd).